Consider the following 332-residue polypeptide: 4-hydroxythreonine-4-phosphate dehydrogenase (332 aa).

2 residues coordinate substrate: H138 and T139. Positions 168, 213, and 269 each coordinate a divalent metal cation. Substrate-binding residues include K277, N286, and R295.

It belongs to the PdxA family. Homodimer. Zn(2+) is required as a cofactor. Mg(2+) serves as cofactor. It depends on Co(2+) as a cofactor.

It localises to the cytoplasm. The enzyme catalyses 4-(phosphooxy)-L-threonine + NAD(+) = 3-amino-2-oxopropyl phosphate + CO2 + NADH. Its pathway is cofactor biosynthesis; pyridoxine 5'-phosphate biosynthesis; pyridoxine 5'-phosphate from D-erythrose 4-phosphate: step 4/5. In terms of biological role, catalyzes the NAD(P)-dependent oxidation of 4-(phosphooxy)-L-threonine (HTP) into 2-amino-3-oxo-4-(phosphooxy)butyric acid which spontaneously decarboxylates to form 3-amino-2-oxopropyl phosphate (AHAP). The protein is 4-hydroxythreonine-4-phosphate dehydrogenase of Vibrio parahaemolyticus serotype O3:K6 (strain RIMD 2210633).